The primary structure comprises 495 residues: ESX-2 secretion system ATPase EccB2 (495 aa).

The helical transmembrane segment at 43 to 63 (LALSMVLVAIAAGWMMLLNVL) threads the bilayer.

It belongs to the EccB family. In terms of assembly, part of the ESX-2 / type VII secretion system (T7SS), which is composed of cytosolic and membrane components.

Its subcellular location is the cell membrane. Its function is as follows. An ATPase. This chain is ESX-2 secretion system ATPase EccB2 (eccB2), found in Mycobacterium tuberculosis (strain CDC 1551 / Oshkosh).